Here is a 116-residue protein sequence, read N- to C-terminus: MRVKGRSSKKFRKKVLKLAKGYRGQKSRVYRKAKEAVIRALKYQYRDRRQRKRQFRALWIARINAACRANGMTYSKFINGLKKAGINLNRKSLSQIAILDPQAFKELIEKARQHVA.

Belongs to the bacterial ribosomal protein bL20 family.

In terms of biological role, binds directly to 23S ribosomal RNA and is necessary for the in vitro assembly process of the 50S ribosomal subunit. It is not involved in the protein synthesizing functions of that subunit. This is Large ribosomal subunit protein bL20 from Hydrogenobaculum sp. (strain Y04AAS1).